The primary structure comprises 87 residues: Putative protein p8 (87 aa).

The protein is Putative protein p8 (8) of Acyrthosiphon pisum secondary endosymbiont phage 1 (Bacteriophage APSE-1).